The following is a 455-amino-acid chain: Anthocyanidin 3-O-glucosyltransferase (455 aa).

Histidine 18 functions as the Proton acceptor in the catalytic mechanism. Histidine 18 provides a ligand contact to an anthocyanidin. Aspartate 118 functions as the Charge relay in the catalytic mechanism. Residue threonine 139 coordinates UDP-alpha-D-glucose. Histidine 148 contributes to the an anthocyanidin binding site. 6 residues coordinate UDP-alpha-D-glucose: alanine 336, glutamine 338, histidine 353, tryptophan 356, serine 358, and glutamate 361. An anthocyanidin is bound at residue glycine 376. Residues aspartate 377 and glutamine 378 each contribute to the UDP-alpha-D-glucose site.

This sequence belongs to the UDP-glycosyltransferase family.

It catalyses the reaction an anthocyanidin + UDP-alpha-D-glucose + H(+) = an anthocyanidin 3-O-beta-D-glucoside + UDP. It functions in the pathway pigment biosynthesis; anthocyanin biosynthesis. Functionally, in the presence of other necessary color factors, this glycosylation reaction allows the accumulation of anthocyanin pigments. In Hordeum vulgare (Barley), this protein is Anthocyanidin 3-O-glucosyltransferase (BZ1).